The sequence spans 437 residues: Keratin, type I cytoskeletal 13 (437 aa).

The tract at residues 1–95 is head; it reads MSCRFQSSSM…GVDGGLLSGN (95 aa). An omega-N-methylarginine mark is found at Arg-27 and Arg-35. A coil 1A region spans residues 96–131; it reads EKITMQNLNDRLASYLDKVRALEAANADLEVKIRDW. The region spanning 96–408 is the IF rod domain; it reads EKITMQNLND…SLLEGQDAKM (313 aa). A linker 1 region spans residues 132 to 150; sequence HLKQSPASPERDYSAYYKT. A coil 1B region spans residues 151-242; that stretch reads IEELRIKILE…KNHEEEMKEF (92 aa). Positions 243-265 are linker 12; sequence SNQVVGQVNVEMDATPGIDLTRV. Positions 266–404 are coil 2; the sequence is LAEMREQYEA…ATYRSLLEGQ (139 aa). The tract at residues 405-437 is tail; it reads DAKMTGFNSGGNNTTTSNGSPSSNSGRPDFRKY. The segment at 408–437 is disordered; the sequence is MTGFNSGGNNTTTSNGSPSSNSGRPDFRKY. The span at 409-430 shows a compositional bias: low complexity; sequence TGFNSGGNNTTTSNGSPSSNSG.

This sequence belongs to the intermediate filament family. Heterotetramer of two type I and two type II keratins. In terms of processing, O-glycosylated; glycans consist of single N-acetylglucosamine residues. Expressed in tongue epithelia (at protein level). Expressed in upper suprabasal layers of the corneal epithelium (at protein level).

Its function is as follows. Type 1 keratin. Maintains postnatal tongue mucosal cell homeostasis and tissue organization in response to mechanical stress, potentially via regulation of the G1/S phase cyclins CCNE1 and CCNE2. The protein is Keratin, type I cytoskeletal 13 (Krt13) of Mus musculus (Mouse).